Reading from the N-terminus, the 132-residue chain is Small ribosomal subunit protein uS8 (132 aa).

It belongs to the universal ribosomal protein uS8 family. Part of the 30S ribosomal subunit. Contacts proteins S5 and S12.

In terms of biological role, one of the primary rRNA binding proteins, it binds directly to 16S rRNA central domain where it helps coordinate assembly of the platform of the 30S subunit. The protein is Small ribosomal subunit protein uS8 of Mycobacterium bovis (strain ATCC BAA-935 / AF2122/97).